Consider the following 288-residue polypeptide: Diaminopimelate epimerase (288 aa).

Substrate is bound by residues Asn-14 and Asn-67. The Proton donor role is filled by Cys-76. Substrate is bound by residues 77–78 (GN), Asn-166, Asn-199, and 217–218 (ER). The active-site Proton acceptor is the Cys-226. 227 to 228 (GT) serves as a coordination point for substrate.

Belongs to the diaminopimelate epimerase family. Homodimer.

The protein resides in the cytoplasm. It carries out the reaction (2S,6S)-2,6-diaminopimelate = meso-2,6-diaminopimelate. It participates in amino-acid biosynthesis; L-lysine biosynthesis via DAP pathway; DL-2,6-diaminopimelate from LL-2,6-diaminopimelate: step 1/1. Catalyzes the stereoinversion of LL-2,6-diaminopimelate (L,L-DAP) to meso-diaminopimelate (meso-DAP), a precursor of L-lysine and an essential component of the bacterial peptidoglycan. The chain is Diaminopimelate epimerase from Bacillus cytotoxicus (strain DSM 22905 / CIP 110041 / 391-98 / NVH 391-98).